Here is a 161-residue protein sequence, read N- to C-terminus: ATP synthase subunit b 1 (161 aa).

Residues 5-25 (EFWVAVAFVIFCGIVWKAGGF) form a helical membrane-spanning segment.

The protein belongs to the ATPase B chain family. F-type ATPases have 2 components, F(1) - the catalytic core - and F(0) - the membrane proton channel. F(1) has five subunits: alpha(3), beta(3), gamma(1), delta(1), epsilon(1). F(0) has three main subunits: a(1), b(2) and c(10-14). The alpha and beta chains form an alternating ring which encloses part of the gamma chain. F(1) is attached to F(0) by a central stalk formed by the gamma and epsilon chains, while a peripheral stalk is formed by the delta and b chains.

It is found in the cell inner membrane. Its function is as follows. F(1)F(0) ATP synthase produces ATP from ADP in the presence of a proton or sodium gradient. F-type ATPases consist of two structural domains, F(1) containing the extramembraneous catalytic core and F(0) containing the membrane proton channel, linked together by a central stalk and a peripheral stalk. During catalysis, ATP synthesis in the catalytic domain of F(1) is coupled via a rotary mechanism of the central stalk subunits to proton translocation. In terms of biological role, component of the F(0) channel, it forms part of the peripheral stalk, linking F(1) to F(0). This chain is ATP synthase subunit b 1, found in Methylobacterium sp. (strain 4-46).